The following is a 283-amino-acid chain: Pre-protein-C8 (283 aa).

The segment at residues methionine 1–alanine 40 is a signal peptide (tat-type signal). The helix-loop-helix (HLH) region stretch occupies residues alanine 61–glutamine 75.

As to quaternary structure, immunity protein HalI interacts with Halocin-C8; the interaction is direct. In terms of processing, predicted to be exported by the Tat system. The position of the signal peptide cleavage has not been experimentally proven.

It localises to the secreted. It is found in the cell membrane. Its function is as follows. Has antibacterial activity against a wide variety of haloarchaeons. Causes cell lysis and death, possibly by disrupting the cell wall. Functionally, acts as an immunity protein for halocin-C8. Able to block the halocin-C8 activity by sequestering the activity of halocin-C8 through specific and direct binding. In Halobacterium sp. (strain AS7092), this protein is Pre-protein-C8 (proC8).